The following is a 355-amino-acid chain: UDP-N-acetylglucosamine--N-acetylmuramyl-(pentapeptide) pyrophosphoryl-undecaprenol N-acetylglucosamine transferase (355 aa).

Residues 11–13 (TAG), arginine 164, serine 194, and glutamine 289 each bind UDP-N-acetyl-alpha-D-glucosamine.

The protein belongs to the glycosyltransferase 28 family. MurG subfamily.

It is found in the cell membrane. It carries out the reaction di-trans,octa-cis-undecaprenyl diphospho-N-acetyl-alpha-D-muramoyl-L-alanyl-D-glutamyl-meso-2,6-diaminopimeloyl-D-alanyl-D-alanine + UDP-N-acetyl-alpha-D-glucosamine = di-trans,octa-cis-undecaprenyl diphospho-[N-acetyl-alpha-D-glucosaminyl-(1-&gt;4)]-N-acetyl-alpha-D-muramoyl-L-alanyl-D-glutamyl-meso-2,6-diaminopimeloyl-D-alanyl-D-alanine + UDP + H(+). The protein operates within cell wall biogenesis; peptidoglycan biosynthesis. In terms of biological role, cell wall formation. Catalyzes the transfer of a GlcNAc subunit on undecaprenyl-pyrophosphoryl-MurNAc-pentapeptide (lipid intermediate I) to form undecaprenyl-pyrophosphoryl-MurNAc-(pentapeptide)GlcNAc (lipid intermediate II). This Lachnoclostridium phytofermentans (strain ATCC 700394 / DSM 18823 / ISDg) (Clostridium phytofermentans) protein is UDP-N-acetylglucosamine--N-acetylmuramyl-(pentapeptide) pyrophosphoryl-undecaprenol N-acetylglucosamine transferase.